The primary structure comprises 1059 residues: Carbamoyl phosphate synthase large chain (1059 aa).

The segment at 1–401 is carboxyphosphate synthetic domain; it reads MPKRSDIKKI…SLLKACRSLE (401 aa). R129, R169, G175, G176, R208, I210, E215, G241, I242, H243, Q284, and E298 together coordinate ATP. The region spanning 133–327 is the ATP-grasp 1 domain; sequence KQLMEELEQP…IAKLAAKIAV (195 aa). Residues Q284, E298, and N300 each contribute to the Mg(2+) site. Q284, E298, and N300 together coordinate Mn(2+). The interval 402 to 546 is oligomerization domain; it reads IGVYHNEMSE…YSTYEWENES (145 aa). Residues 547 to 929 form a carbamoyl phosphate synthetic domain region; the sequence is IKSDKESVIV…ALYKAFEASY (383 aa). Positions 671–861 constitute an ATP-grasp 2 domain; that stretch reads EQALKDLDIP…MAQVATNLIL (191 aa). Residues R707, S746, I748, E752, G777, V778, H779, S780, Q820, and E832 each contribute to the ATP site. Mg(2+)-binding residues include Q820, E832, and N834. Mn(2+) is bound by residues Q820, E832, and N834. The 130-residue stretch at 930 to 1059 folds into the MGS-like domain; the sequence is LHLPTFGNVI…ESRSFTTEAI (130 aa). Residues 930 to 1059 form an allosteric domain region; the sequence is LHLPTFGNVI…ESRSFTTEAI (130 aa).

The protein belongs to the CarB family. Composed of two chains; the small (or glutamine) chain promotes the hydrolysis of glutamine to ammonia, which is used by the large (or ammonia) chain to synthesize carbamoyl phosphate. Tetramer of heterodimers (alpha,beta)4. Mg(2+) serves as cofactor. Requires Mn(2+) as cofactor.

It catalyses the reaction hydrogencarbonate + L-glutamine + 2 ATP + H2O = carbamoyl phosphate + L-glutamate + 2 ADP + phosphate + 2 H(+). The enzyme catalyses hydrogencarbonate + NH4(+) + 2 ATP = carbamoyl phosphate + 2 ADP + phosphate + 2 H(+). The protein operates within amino-acid biosynthesis; L-arginine biosynthesis; carbamoyl phosphate from bicarbonate: step 1/1. It participates in pyrimidine metabolism; UMP biosynthesis via de novo pathway; (S)-dihydroorotate from bicarbonate: step 1/3. Its function is as follows. Large subunit of the glutamine-dependent carbamoyl phosphate synthetase (CPSase). CPSase catalyzes the formation of carbamoyl phosphate from the ammonia moiety of glutamine, carbonate, and phosphate donated by ATP, constituting the first step of 2 biosynthetic pathways, one leading to arginine and/or urea and the other to pyrimidine nucleotides. The large subunit (synthetase) binds the substrates ammonia (free or transferred from glutamine from the small subunit), hydrogencarbonate and ATP and carries out an ATP-coupled ligase reaction, activating hydrogencarbonate by forming carboxy phosphate which reacts with ammonia to form carbamoyl phosphate. The sequence is that of Carbamoyl phosphate synthase large chain from Streptococcus thermophilus (strain ATCC BAA-250 / LMG 18311).